The chain runs to 76 residues: Exodeoxyribonuclease 7 small subunit (76 aa).

The protein belongs to the XseB family. As to quaternary structure, heterooligomer composed of large and small subunits.

The protein localises to the cytoplasm. It catalyses the reaction Exonucleolytic cleavage in either 5'- to 3'- or 3'- to 5'-direction to yield nucleoside 5'-phosphates.. Bidirectionally degrades single-stranded DNA into large acid-insoluble oligonucleotides, which are then degraded further into small acid-soluble oligonucleotides. This chain is Exodeoxyribonuclease 7 small subunit, found in Bacillus cereus (strain G9842).